A 173-amino-acid polypeptide reads, in one-letter code: Alpha-crystallin A chain (173 aa).

Met-1 carries the N-acetylmethionine modification. The sHSP domain occupies 52–162 (LFRSVLESGI…SHSERPIPVS (111 aa)). The Zn(2+) site is built by His-100, Glu-102, His-107, and His-154. The interval 142–173 (SGPKVPSNMDPSHSERPIPVSREEKPTSAPSS) is disordered. Over residues 153 to 167 (SHSERPIPVSREEKP) the composition is skewed to basic and acidic residues. A glycan (O-linked (GlcNAc) serine) is linked at Ser-162.

It belongs to the small heat shock protein (HSP20) family. As to quaternary structure, heteropolymer composed of three CRYAA and one CRYAB subunits. Inter-subunit bridging via zinc ions enhances stability, which is crucial as there is no protein turn over in the lens. Can also form homodimers and homotetramers (dimers of dimers) which serve as the building blocks of homooligomers. Within homooligomers, the zinc-binding motif is created from residues of 3 different molecules. His-100 and Glu-102 from one molecule are ligands of the zinc ion, and His-107 and His-154 residues from additional molecules complete the site with tetrahedral coordination geometry.

The protein resides in the cytoplasm. It is found in the nucleus. Its function is as follows. Contributes to the transparency and refractive index of the lens. May act as a chaperone, preventing aggregation of various proteins under a wide range of stress conditions. This Gallus gallus (Chicken) protein is Alpha-crystallin A chain (CRYAA).